We begin with the raw amino-acid sequence, 116 residues long: Putative pterin-4-alpha-carbinolamine dehydratase (116 aa).

Belongs to the pterin-4-alpha-carbinolamine dehydratase family.

It catalyses the reaction (4aS,6R)-4a-hydroxy-L-erythro-5,6,7,8-tetrahydrobiopterin = (6R)-L-erythro-6,7-dihydrobiopterin + H2O. In Paracidovorax citrulli (strain AAC00-1) (Acidovorax citrulli), this protein is Putative pterin-4-alpha-carbinolamine dehydratase.